The primary structure comprises 601 residues: Elongation factor 4 (601 aa).

Residues 7–189 (DNIRNFSIVA…AIVKRLPPPK (183 aa)) form the tr-type G domain. GTP is bound by residues 19 to 24 (DHGKST) and 136 to 139 (NKVD).

Belongs to the TRAFAC class translation factor GTPase superfamily. Classic translation factor GTPase family. LepA subfamily.

Its subcellular location is the cell inner membrane. It carries out the reaction GTP + H2O = GDP + phosphate + H(+). Required for accurate and efficient protein synthesis under certain stress conditions. May act as a fidelity factor of the translation reaction, by catalyzing a one-codon backward translocation of tRNAs on improperly translocated ribosomes. Back-translocation proceeds from a post-translocation (POST) complex to a pre-translocation (PRE) complex, thus giving elongation factor G a second chance to translocate the tRNAs correctly. Binds to ribosomes in a GTP-dependent manner. This chain is Elongation factor 4, found in Methylorubrum populi (strain ATCC BAA-705 / NCIMB 13946 / BJ001) (Methylobacterium populi).